Reading from the N-terminus, the 312-residue chain is Mas-related G-protein coupled receptor member B3 (312 aa).

The Extracellular portion of the chain corresponds to 1–31 (MALRTSLITTTAPDKTSLPISICIIKFQVMN). A helical transmembrane segment spans residues 32-52 (LLSITISPVGMVLNIIVLWFL). At 53-67 (GFQICRNAFSAYILN) the chain is on the cytoplasmic side. A helical membrane pass occupies residues 68-88 (LAVADFLFLCSHSIFSFLIVC). The Extracellular segment spans residues 89-106 (KLHYFLFYIRQLLDTVTM). A helical transmembrane segment spans residues 107–127 (FAYVFGLSITTIISIECCLSI). Topologically, residues 128-140 (MWPIWYHCQRPRH) are cytoplasmic. Residues 141–161 (TSAVICVLLWALSLLFPALQM) form a helical membrane-spanning segment. The Extracellular portion of the chain corresponds to 162–180 (EKCSVLFNTFEYSWCGIIN). The helical transmembrane segment at 181–201 (IISGAWLVVLFVVLCGFSLIL) threads the bilayer. Residues 202 to 220 (LLRISCGSQQIPVTRLNVT) are Cytoplasmic-facing. A helical transmembrane segment spans residues 221-241 (IALRVLLLLIFGIPFGIFWIV). Topologically, residues 242–259 (DKWNEENFFVRACGFSHH) are extracellular. The chain crosses the membrane as a helical span at residues 260 to 280 (ILYVYCINICVNATIYFLVGS). Over 281 to 312 (IRHGKFQKMTLKLILQRAIQGTPEEEGGERGP) the chain is Cytoplasmic.

It belongs to the G-protein coupled receptor 1 family. Mas subfamily.

It is found in the membrane. Orphan receptor. Probably involved in the function of nociceptive neurons. May regulate nociceptor function and/or development, including the sensation or modulation of pain. The sequence is that of Mas-related G-protein coupled receptor member B3 (Mrgprb3) from Mus musculus (Mouse).